Here is a 148-residue protein sequence, read N- to C-terminus: NADH-quinone oxidoreductase subunit C (148 aa).

Belongs to the complex I 30 kDa subunit family. NDH-1 is composed of 14 different subunits. Subunits NuoB, C, D, E, F, and G constitute the peripheral sector of the complex.

It localises to the cell membrane. It catalyses the reaction a quinone + NADH + 5 H(+)(in) = a quinol + NAD(+) + 4 H(+)(out). In terms of biological role, NDH-1 shuttles electrons from NADH, via FMN and iron-sulfur (Fe-S) centers, to quinones in the respiratory chain. The immediate electron acceptor for the enzyme in this species is believed to be a menaquinone. Couples the redox reaction to proton translocation (for every two electrons transferred, four hydrogen ions are translocated across the cytoplasmic membrane), and thus conserves the redox energy in a proton gradient. The polypeptide is NADH-quinone oxidoreductase subunit C (Moorella thermoacetica (strain ATCC 39073 / JCM 9320)).